The following is a 471-amino-acid chain: ATP synthase subunit beta (471 aa).

153-160 (GGAGVGKT) lines the ATP pocket.

It belongs to the ATPase alpha/beta chains family. F-type ATPases have 2 components, CF(1) - the catalytic core - and CF(0) - the membrane proton channel. CF(1) has five subunits: alpha(3), beta(3), gamma(1), delta(1), epsilon(1). CF(0) has three main subunits: a(1), b(2) and c(9-12). The alpha and beta chains form an alternating ring which encloses part of the gamma chain. CF(1) is attached to CF(0) by a central stalk formed by the gamma and epsilon chains, while a peripheral stalk is formed by the delta and b chains.

It is found in the cell membrane. It catalyses the reaction ATP + H2O + 4 H(+)(in) = ADP + phosphate + 5 H(+)(out). Its function is as follows. Produces ATP from ADP in the presence of a proton gradient across the membrane. The catalytic sites are hosted primarily by the beta subunits. The polypeptide is ATP synthase subunit beta (Levilactobacillus brevis (strain ATCC 367 / BCRC 12310 / CIP 105137 / JCM 1170 / LMG 11437 / NCIMB 947 / NCTC 947) (Lactobacillus brevis)).